A 388-amino-acid polypeptide reads, in one-letter code: Sulfate adenylyltransferase (388 aa).

It belongs to the sulfate adenylyltransferase family.

It carries out the reaction sulfate + ATP + H(+) = adenosine 5'-phosphosulfate + diphosphate. It functions in the pathway sulfur metabolism; hydrogen sulfide biosynthesis; sulfite from sulfate: step 1/3. The protein is Sulfate adenylyltransferase of Acaryochloris marina (strain MBIC 11017).